A 95-amino-acid polypeptide reads, in one-letter code: Co-chaperonin GroES (95 aa).

Belongs to the GroES chaperonin family. Heptamer of 7 subunits arranged in a ring. Interacts with the chaperonin GroEL.

The protein localises to the cytoplasm. Functionally, together with the chaperonin GroEL, plays an essential role in assisting protein folding. The GroEL-GroES system forms a nano-cage that allows encapsulation of the non-native substrate proteins and provides a physical environment optimized to promote and accelerate protein folding. GroES binds to the apical surface of the GroEL ring, thereby capping the opening of the GroEL channel. The sequence is that of Co-chaperonin GroES from Ruegeria sp. (strain TM1040) (Silicibacter sp.).